A 184-amino-acid polypeptide reads, in one-letter code: Large ribosomal subunit protein uL6 (184 aa).

The protein belongs to the universal ribosomal protein uL6 family. In terms of assembly, part of the 50S ribosomal subunit.

Functionally, this protein binds to the 23S rRNA, and is important in its secondary structure. It is located near the subunit interface in the base of the L7/L12 stalk, and near the tRNA binding site of the peptidyltransferase center. The sequence is that of Large ribosomal subunit protein uL6 from Mycoplasma pneumoniae (strain ATCC 29342 / M129 / Subtype 1) (Mycoplasmoides pneumoniae).